Consider the following 281-residue polypeptide: Large ribosomal subunit protein uL2 (281 aa).

The segment at V220–K281 is disordered. Residues K258 to M271 are compositionally biased toward basic residues. Basic and acidic residues predominate over residues R272–K281.

The protein belongs to the universal ribosomal protein uL2 family. As to quaternary structure, part of the 50S ribosomal subunit. Forms a bridge to the 30S subunit in the 70S ribosome.

In terms of biological role, one of the primary rRNA binding proteins. Required for association of the 30S and 50S subunits to form the 70S ribosome, for tRNA binding and peptide bond formation. It has been suggested to have peptidyltransferase activity; this is somewhat controversial. Makes several contacts with the 16S rRNA in the 70S ribosome. In Lachnoclostridium phytofermentans (strain ATCC 700394 / DSM 18823 / ISDg) (Clostridium phytofermentans), this protein is Large ribosomal subunit protein uL2.